We begin with the raw amino-acid sequence, 56 residues long: Large ribosomal subunit protein bL33 (56 aa).

It belongs to the bacterial ribosomal protein bL33 family.

This chain is Large ribosomal subunit protein bL33, found in Beutenbergia cavernae (strain ATCC BAA-8 / DSM 12333 / CCUG 43141 / JCM 11478 / NBRC 16432 / NCIMB 13614 / HKI 0122).